A 394-amino-acid polypeptide reads, in one-letter code: Monoterpene synthase FDS-5, chloroplastic (394 aa).

A chloroplast-targeting transit peptide spans 1–65 (MASFISLSSK…NLNSQFMQVY (65 aa)). Isopentenyl diphosphate-binding residues include Lys100, Arg103, and Gln138. Mg(2+)-binding residues include Asp145 and Asp149. The DDXXD motif signature appears at 145 to 149 (DDMMD). Position 154 (Arg154) interacts with dimethylallyl diphosphate. Arg155 contacts isopentenyl diphosphate. Residues Lys242, Gln281, Lys298, and Lys307 each coordinate dimethylallyl diphosphate.

Belongs to the FPP/GGPP synthase family. Mg(2+) is required as a cofactor. The cofactor is Mn(2+).

It localises to the plastid. It is found in the chloroplast. It carries out the reaction isopentenyl diphosphate + dimethylallyl diphosphate = (2E)-geranyl diphosphate + diphosphate. It catalyses the reaction 2 dimethylallyl diphosphate = (R,R)-chrysanthemyl diphosphate + diphosphate. The catalysed reaction is 2 dimethylallyl diphosphate = (R)-lavandulyl diphosphate + diphosphate. Condenses two molecules of dimethylallyl diphosphate (DMAPP) to produce mainly an irregular monoterpene, chrysanthemyl diphosphate (CPP) and lower amounts of a branched monoterpene, lavandulyl diphosphate (LPP). CPP is a precursor of the pyrethrin insecticides. When incubated with isopentenyl diphosphate (IPP) and DMAPP, catalyzes three competing isoprenoid condensation reactions, a chain elongation to give geranyl diphosphate (GPP), a cyclopropanation to give CPP and a branching to give LPP. The protein is Monoterpene synthase FDS-5, chloroplastic (FDS-5) of Artemisia spiciformis (Spiked big sagebrush).